The chain runs to 123 residues: Small ribosomal subunit protein uS12 (123 aa).

At Asp-89 the chain carries 3-methylthioaspartic acid.

The protein belongs to the universal ribosomal protein uS12 family. Part of the 30S ribosomal subunit. Contacts proteins S8 and S17. May interact with IF1 in the 30S initiation complex.

Functionally, with S4 and S5 plays an important role in translational accuracy. Interacts with and stabilizes bases of the 16S rRNA that are involved in tRNA selection in the A site and with the mRNA backbone. Located at the interface of the 30S and 50S subunits, it traverses the body of the 30S subunit contacting proteins on the other side and probably holding the rRNA structure together. The combined cluster of proteins S8, S12 and S17 appears to hold together the shoulder and platform of the 30S subunit. The protein is Small ribosomal subunit protein uS12 of Bartonella bacilliformis (strain ATCC 35685 / KC583 / Herrer 020/F12,63).